The sequence spans 372 residues: tRNA-specific 2-thiouridylase MnmA (372 aa).

Residues 11–18 (GMSGGVDS) and Met-37 each bind ATP. Residues 97–99 (NPD) form an interaction with target base in tRNA region. The active-site Nucleophile is the Cys-102. Residues Cys-102 and Cys-199 are joined by a disulfide bond. Residue Gly-126 participates in ATP binding. Residues 149-151 (KDQ) are interaction with tRNA. The Cysteine persulfide intermediate role is filled by Cys-199. An interaction with tRNA region spans residues 309 to 310 (RY).

Belongs to the MnmA/TRMU family.

The protein localises to the cytoplasm. The catalysed reaction is S-sulfanyl-L-cysteinyl-[protein] + uridine(34) in tRNA + AH2 + ATP = 2-thiouridine(34) in tRNA + L-cysteinyl-[protein] + A + AMP + diphosphate + H(+). In terms of biological role, catalyzes the 2-thiolation of uridine at the wobble position (U34) of tRNA, leading to the formation of s(2)U34. The sequence is that of tRNA-specific 2-thiouridylase MnmA from Staphylococcus epidermidis (strain ATCC 35984 / DSM 28319 / BCRC 17069 / CCUG 31568 / BM 3577 / RP62A).